The chain runs to 75 residues: Small ribosomal subunit protein bS16 (75 aa).

The protein belongs to the bacterial ribosomal protein bS16 family.

The protein is Small ribosomal subunit protein bS16 of Campylobacter hominis (strain ATCC BAA-381 / DSM 21671 / CCUG 45161 / LMG 19568 / NCTC 13146 / CH001A).